The chain runs to 415 residues: Imidazolonepropionase (415 aa).

Residues histidine 76 and histidine 78 each coordinate Fe(3+). Zn(2+)-binding residues include histidine 76 and histidine 78. Positions 85, 148, and 181 each coordinate 4-imidazolone-5-propanoate. Tyrosine 148 contacts N-formimidoyl-L-glutamate. Histidine 246 is a Fe(3+) binding site. A Zn(2+)-binding site is contributed by histidine 246. Glutamate 249 contacts 4-imidazolone-5-propanoate. Aspartate 320 is a binding site for Fe(3+). Position 320 (aspartate 320) interacts with Zn(2+). Residues asparagine 322 and glycine 324 each contribute to the N-formimidoyl-L-glutamate site. 4-imidazolone-5-propanoate is bound at residue threonine 325.

This sequence belongs to the metallo-dependent hydrolases superfamily. HutI family. Zn(2+) serves as cofactor. The cofactor is Fe(3+).

The protein resides in the cytoplasm. The enzyme catalyses 4-imidazolone-5-propanoate + H2O = N-formimidoyl-L-glutamate. It participates in amino-acid degradation; L-histidine degradation into L-glutamate; N-formimidoyl-L-glutamate from L-histidine: step 3/3. Catalyzes the hydrolytic cleavage of the carbon-nitrogen bond in imidazolone-5-propanoate to yield N-formimidoyl-L-glutamate. It is the third step in the universal histidine degradation pathway. In Caldanaerobacter subterraneus subsp. tengcongensis (strain DSM 15242 / JCM 11007 / NBRC 100824 / MB4) (Thermoanaerobacter tengcongensis), this protein is Imidazolonepropionase.